The following is a 369-amino-acid chain: Aspartate-semialdehyde dehydrogenase (369 aa).

NADP(+)-binding positions include 11–14 (RGMV), 38–39 (TS), and Gln75. Residue Arg104 coordinates phosphate. Cys137 acts as the Acyl-thioester intermediate in catalysis. Substrate is bound at residue Gln164. Residues 167–168 (SG) and Pro195 contribute to the NADP(+) site. Glu243 provides a ligand contact to substrate. Position 246 (Lys246) interacts with phosphate. Arg269 serves as a coordination point for substrate. Residue His276 is the Proton acceptor of the active site. Residue Gln352 coordinates NADP(+).

Belongs to the aspartate-semialdehyde dehydrogenase family. Homodimer.

The enzyme catalyses L-aspartate 4-semialdehyde + phosphate + NADP(+) = 4-phospho-L-aspartate + NADPH + H(+). It participates in amino-acid biosynthesis; L-lysine biosynthesis via DAP pathway; (S)-tetrahydrodipicolinate from L-aspartate: step 2/4. The protein operates within amino-acid biosynthesis; L-methionine biosynthesis via de novo pathway; L-homoserine from L-aspartate: step 2/3. Its pathway is amino-acid biosynthesis; L-threonine biosynthesis; L-threonine from L-aspartate: step 2/5. Functionally, catalyzes the NADPH-dependent formation of L-aspartate-semialdehyde (L-ASA) by the reductive dephosphorylation of L-aspartyl-4-phosphate. The chain is Aspartate-semialdehyde dehydrogenase from Buchnera aphidicola subsp. Baizongia pistaciae (strain Bp).